The primary structure comprises 155 residues: UPF0178 protein ACICU_02858 (155 aa).

Residues 120 to 155 (GAGVQTGGPPPISERDKREFSSALDQTILKQKRKTA) form a disordered region.

Belongs to the UPF0178 family.

The protein is UPF0178 protein ACICU_02858 of Acinetobacter baumannii (strain ACICU).